Here is a 498-residue protein sequence, read N- to C-terminus: Isoflavone 2'-hydroxylase (498 aa).

The chain crosses the membrane as a helical span at residues 3 to 23 (ILSYLCYSLFYLSIFFIIRLL). Cys436 serves as a coordination point for heme.

Belongs to the cytochrome P450 family. It depends on heme as a cofactor. Expressed constitutively in roots, but present at very low levels in uninfected stems and leaves.

The protein resides in the endoplasmic reticulum membrane. The catalysed reaction is formononetin + reduced [NADPH--hemoprotein reductase] + O2 = 2'-hydroxyformononetin + oxidized [NADPH--hemoprotein reductase] + H2O + H(+). Its function is as follows. Involved in the biosynthesis of the pterocarpin phytoalexins. Acts on isoflavones with a 4'-methoxy group on the B-ring, such as formononetin and biochanin A, and on pseudobaptigenin. Has a low activity with daidzein and genistein and no activity with the 7-O-methylated isoflavonoids isoformononetin and prunetin. This Medicago truncatula (Barrel medic) protein is Isoflavone 2'-hydroxylase.